The primary structure comprises 444 residues: Phosphoglucosamine mutase (444 aa).

The active-site Phosphoserine intermediate is serine 102. Positions 102, 241, 243, and 245 each coordinate Mg(2+). At serine 102 the chain carries Phosphoserine.

The protein belongs to the phosphohexose mutase family. Requires Mg(2+) as cofactor. In terms of processing, activated by phosphorylation.

The catalysed reaction is alpha-D-glucosamine 1-phosphate = D-glucosamine 6-phosphate. In terms of biological role, catalyzes the conversion of glucosamine-6-phosphate to glucosamine-1-phosphate. This Paracidovorax citrulli (strain AAC00-1) (Acidovorax citrulli) protein is Phosphoglucosamine mutase.